Reading from the N-terminus, the 477-residue chain is Protein nucleotidyltransferase YdiU (477 aa).

G89, G91, R92, K112, D124, G125, R178, and R185 together coordinate ATP. The active-site Proton acceptor is D257. Mg(2+) is bound by residues N258 and D267. Residue D267 coordinates ATP.

The protein belongs to the SELO family. Mg(2+) is required as a cofactor. Requires Mn(2+) as cofactor.

It catalyses the reaction L-seryl-[protein] + ATP = 3-O-(5'-adenylyl)-L-seryl-[protein] + diphosphate. It carries out the reaction L-threonyl-[protein] + ATP = 3-O-(5'-adenylyl)-L-threonyl-[protein] + diphosphate. The enzyme catalyses L-tyrosyl-[protein] + ATP = O-(5'-adenylyl)-L-tyrosyl-[protein] + diphosphate. The catalysed reaction is L-histidyl-[protein] + UTP = N(tele)-(5'-uridylyl)-L-histidyl-[protein] + diphosphate. It catalyses the reaction L-seryl-[protein] + UTP = O-(5'-uridylyl)-L-seryl-[protein] + diphosphate. It carries out the reaction L-tyrosyl-[protein] + UTP = O-(5'-uridylyl)-L-tyrosyl-[protein] + diphosphate. Functionally, nucleotidyltransferase involved in the post-translational modification of proteins. It can catalyze the addition of adenosine monophosphate (AMP) or uridine monophosphate (UMP) to a protein, resulting in modifications known as AMPylation and UMPylation. The protein is Protein nucleotidyltransferase YdiU of Synechocystis sp. (strain ATCC 27184 / PCC 6803 / Kazusa).